A 295-amino-acid polypeptide reads, in one-letter code: Fructose-bisphosphate aldolase class 1 (295 aa).

Catalysis depends on Glu176, which acts as the Proton acceptor. Lys213 (schiff-base intermediate with dihydroxyacetone-P) is an active-site residue.

The protein belongs to the class I fructose-bisphosphate aldolase family.

It catalyses the reaction beta-D-fructose 1,6-bisphosphate = D-glyceraldehyde 3-phosphate + dihydroxyacetone phosphate. The protein operates within carbohydrate degradation; glycolysis; D-glyceraldehyde 3-phosphate and glycerone phosphate from D-glucose: step 4/4. The polypeptide is Fructose-bisphosphate aldolase class 1 (Fusobacterium nucleatum subsp. nucleatum (strain ATCC 25586 / DSM 15643 / BCRC 10681 / CIP 101130 / JCM 8532 / KCTC 2640 / LMG 13131 / VPI 4355)).